We begin with the raw amino-acid sequence, 140 residues long: Large ribosomal subunit protein uL11 (140 aa).

This sequence belongs to the universal ribosomal protein uL11 family. In terms of assembly, part of the ribosomal stalk of the 50S ribosomal subunit. Interacts with L10 and the large rRNA to form the base of the stalk. L10 forms an elongated spine to which L12 dimers bind in a sequential fashion forming a multimeric L10(L12)X complex. One or more lysine residues are methylated.

Its function is as follows. Forms part of the ribosomal stalk which helps the ribosome interact with GTP-bound translation factors. This Staphylococcus aureus (strain bovine RF122 / ET3-1) protein is Large ribosomal subunit protein uL11.